Reading from the N-terminus, the 165-residue chain is RxLR effector protein PITG_09218 (165 aa).

The first 24 residues, 1–24 (MRFSAFLTLLLVAFVASCSTFASA), serve as a signal peptide directing secretion. Residues 31–57 (RRLRADAAPVPVNKDNVAKLAGGFLEK) carry the RxLR-dEER motif. Residues 129 to 149 (VTLGATVAGFAIYGAYKALFD) form a helical membrane-spanning segment.

The protein belongs to the RxLR effector family.

The protein resides in the secreted. It localises to the host mitochondrion membrane. It is found in the host endoplasmic reticulum membrane. Effector that enhances P.infestans colonization of Nicotiana benthamiana leaves. The protein is RxLR effector protein PITG_09218 of Phytophthora infestans (strain T30-4) (Potato late blight agent).